An 803-amino-acid polypeptide reads, in one-letter code: Elongation factor G, mitochondrial (803 aa).

The transit peptide at 1–24 directs the protein to the mitochondrion; sequence MVRPAQVRAFSGLARSATSTRLIP. The 287-residue stretch at 102-388 folds into the tr-type G domain; the sequence is SKVRNIGIAA…GVCDYLPNPS (287 aa). GTP is bound by residues 111–118, 186–190, and 240–243; these read AHIDSGKT, DTPGH, and NKMD.

The protein belongs to the TRAFAC class translation factor GTPase superfamily. Classic translation factor GTPase family. EF-G/EF-2 subfamily.

Its subcellular location is the mitochondrion. Its pathway is protein biosynthesis; polypeptide chain elongation. Its function is as follows. Mitochondrial GTPase that catalyzes the GTP-dependent ribosomal translocation step during translation elongation. During this step, the ribosome changes from the pre-translocational (PRE) to the post-translocational (POST) state as the newly formed A-site-bound peptidyl-tRNA and P-site-bound deacylated tRNA move to the P and E sites, respectively. Catalyzes the coordinated movement of the two tRNA molecules, the mRNA and conformational changes in the ribosome. This is Elongation factor G, mitochondrial (mef1) from Talaromyces marneffei (strain ATCC 18224 / CBS 334.59 / QM 7333) (Penicillium marneffei).